We begin with the raw amino-acid sequence, 435 residues long: Probable exopolygalacturonase B (435 aa).

A signal peptide spans 1 to 15; sequence MKFFTAALFASAVSA. Residues Asn59, Asn184, and Asn224 are each glycosylated (N-linked (GlcNAc...) asparagine). Residue Asp254 is the Proton donor of the active site. A disulfide bridge links Cys256 with Cys273. 2 N-linked (GlcNAc...) asparagine glycosylation sites follow: Asn262 and Asn274. His277 is a catalytic residue. Residues Asn301, Asn328, Asn365, and Asn368 are each glycosylated (N-linked (GlcNAc...) asparagine). Cys391 and Cys397 are oxidised to a cystine.

This sequence belongs to the glycosyl hydrolase 28 family.

Its subcellular location is the secreted. The catalysed reaction is [(1-&gt;4)-alpha-D-galacturonosyl](n) + H2O = alpha-D-galacturonate + [(1-&gt;4)-alpha-D-galacturonosyl](n-1). Specific in hydrolyzing the terminal glycosidic bond of polygalacturonic acid and oligogalacturonates. This chain is Probable exopolygalacturonase B (pgxB), found in Aspergillus terreus (strain NIH 2624 / FGSC A1156).